The sequence spans 647 residues: Threonine--tRNA ligase (647 aa).

In terms of domain architecture, TGS spans 1–61 (MIKITFPDGA…EEDGSIEIVT (61 aa)). Positions 240 to 538 (DHRKLGKELD…LIETYKGAFP (299 aa)) are catalytic. Zn(2+)-binding residues include cysteine 334, histidine 385, and histidine 515.

The protein belongs to the class-II aminoacyl-tRNA synthetase family. In terms of assembly, homodimer. Zn(2+) is required as a cofactor.

It localises to the cytoplasm. The catalysed reaction is tRNA(Thr) + L-threonine + ATP = L-threonyl-tRNA(Thr) + AMP + diphosphate + H(+). Its function is as follows. Catalyzes the attachment of threonine to tRNA(Thr) in a two-step reaction: L-threonine is first activated by ATP to form Thr-AMP and then transferred to the acceptor end of tRNA(Thr). Also edits incorrectly charged L-seryl-tRNA(Thr). This Streptococcus agalactiae serotype III (strain NEM316) protein is Threonine--tRNA ligase.